The primary structure comprises 343 residues: CRISPR-associated endonuclease Cas1 1 (343 aa).

Mn(2+)-binding residues include Glu-166, His-234, and Glu-249.

Belongs to the CRISPR-associated endonuclease Cas1 family. In terms of assembly, homodimer, forms a heterotetramer with a Cas2 homodimer. Mg(2+) is required as a cofactor. Mn(2+) serves as cofactor.

Its function is as follows. CRISPR (clustered regularly interspaced short palindromic repeat), is an adaptive immune system that provides protection against mobile genetic elements (viruses, transposable elements and conjugative plasmids). CRISPR clusters contain spacers, sequences complementary to antecedent mobile elements, and target invading nucleic acids. CRISPR clusters are transcribed and processed into CRISPR RNA (crRNA). Acts as a dsDNA endonuclease. Involved in the integration of spacer DNA into the CRISPR cassette. The chain is CRISPR-associated endonuclease Cas1 1 from Moorella thermoacetica (strain ATCC 39073 / JCM 9320).